The following is a 119-amino-acid chain: BLOC-1-related complex subunit 8 (119 aa).

Ser109 is modified (phosphoserine).

It belongs to the BORCS8 family. As to quaternary structure, component of the BLOC-one-related complex (BORC) which is composed of BLOC1S1, BLOC1S2, BORCS5, BORCS6, BORCS7, BORCS8, KXD1 and SNAPIN.

It localises to the lysosome membrane. As part of the BLOC-one-related complex (BORC), it plays a role in the movement and localization of lysosomes at the cell periphery. Associated with the cytosolic face of lysosomes, BORC recruits ARL8B to the lysosomal membrane and couples lysosomes to microtubule plus-end-directed kinesin motors, driving lysosome movement toward the cell periphery. This is BLOC-1-related complex subunit 8 from Homo sapiens (Human).